Consider the following 654-residue polypeptide: Probable Xaa-Pro aminopeptidase P (654 aa).

The Mn(2+) site is built by aspartate 449, aspartate 460, glutamate 558, and glutamate 572.

The protein belongs to the peptidase M24B family. Mn(2+) is required as a cofactor.

The enzyme catalyses Release of any N-terminal amino acid, including proline, that is linked to proline, even from a dipeptide or tripeptide.. In terms of biological role, catalyzes the removal of a penultimate prolyl residue from the N-termini of peptides. The chain is Probable Xaa-Pro aminopeptidase P (ampp) from Aspergillus flavus (strain ATCC 200026 / FGSC A1120 / IAM 13836 / NRRL 3357 / JCM 12722 / SRRC 167).